The following is an 89-amino-acid chain: Small ribosomal subunit protein uS15 (89 aa).

Belongs to the universal ribosomal protein uS15 family. In terms of assembly, part of the 30S ribosomal subunit. Forms a bridge to the 50S subunit in the 70S ribosome, contacting the 23S rRNA.

Its function is as follows. One of the primary rRNA binding proteins, it binds directly to 16S rRNA where it helps nucleate assembly of the platform of the 30S subunit by binding and bridging several RNA helices of the 16S rRNA. Functionally, forms an intersubunit bridge (bridge B4) with the 23S rRNA of the 50S subunit in the ribosome. The protein is Small ribosomal subunit protein uS15 of Oceanobacillus iheyensis (strain DSM 14371 / CIP 107618 / JCM 11309 / KCTC 3954 / HTE831).